Reading from the N-terminus, the 229-residue chain is MKKFSRRLTTLKSKVEPKLYTINEAVSILKATSNAKFKETAEAHIALGLNPKYADQQLRATVILPKGTGKLIKVAVIAKGEKLTEAISAGADVSGSEELIDEILKGRLDFDKLIATPDVMPLIAKLGRVLGPRGLMPSPKAGTVTLDVAKAVNEFKGGKVEYRVDRTGIIHVPFGKSSFSQEDLVLNLQTIKESIDRNKPSGAKGKYWKTFFLSSTMGPSIQIDITSLL.

It belongs to the universal ribosomal protein uL1 family. As to quaternary structure, part of the 50S ribosomal subunit.

The protein resides in the plastid. It is found in the chloroplast. Its function is as follows. Binds directly to 23S rRNA. Might be involved in E site tRNA release (Potential). This chain is Large ribosomal subunit protein uL1c (rpl1), found in Pyropia yezoensis (Susabi-nori).